The chain runs to 72 residues: Translation initiation factor IF-1 (72 aa).

The 72-residue stretch at methionine 1–lysine 72 folds into the S1-like domain.

It belongs to the IF-1 family. Component of the 30S ribosomal translation pre-initiation complex which assembles on the 30S ribosome in the order IF-2 and IF-3, IF-1 and N-formylmethionyl-tRNA(fMet); mRNA recruitment can occur at any time during PIC assembly.

It localises to the cytoplasm. In terms of biological role, one of the essential components for the initiation of protein synthesis. Stabilizes the binding of IF-2 and IF-3 on the 30S subunit to which N-formylmethionyl-tRNA(fMet) subsequently binds. Helps modulate mRNA selection, yielding the 30S pre-initiation complex (PIC). Upon addition of the 50S ribosomal subunit IF-1, IF-2 and IF-3 are released leaving the mature 70S translation initiation complex. The chain is Translation initiation factor IF-1 from Paramagnetospirillum magneticum (strain ATCC 700264 / AMB-1) (Magnetospirillum magneticum).